A 287-amino-acid polypeptide reads, in one-letter code: 4-diphosphocytidyl-2-C-methyl-D-erythritol kinase (287 aa).

The active site involves K14. Position 98–108 (98–108 (PPGAGLGGGSS)) interacts with ATP. The active site involves D140.

This sequence belongs to the GHMP kinase family. IspE subfamily.

The catalysed reaction is 4-CDP-2-C-methyl-D-erythritol + ATP = 4-CDP-2-C-methyl-D-erythritol 2-phosphate + ADP + H(+). Its pathway is isoprenoid biosynthesis; isopentenyl diphosphate biosynthesis via DXP pathway; isopentenyl diphosphate from 1-deoxy-D-xylulose 5-phosphate: step 3/6. In terms of biological role, catalyzes the phosphorylation of the position 2 hydroxy group of 4-diphosphocytidyl-2C-methyl-D-erythritol. This chain is 4-diphosphocytidyl-2-C-methyl-D-erythritol kinase, found in Methylacidiphilum infernorum (isolate V4) (Methylokorus infernorum (strain V4)).